A 444-amino-acid polypeptide reads, in one-letter code: Methylenetetrahydrofolate--tRNA-(uracil-5-)-methyltransferase TrmFO (444 aa).

9-14 provides a ligand contact to FAD; the sequence is GAGMAG.

Belongs to the MnmG family. TrmFO subfamily. Requires FAD as cofactor.

It is found in the cytoplasm. The enzyme catalyses uridine(54) in tRNA + (6R)-5,10-methylene-5,6,7,8-tetrahydrofolate + NADH + H(+) = 5-methyluridine(54) in tRNA + (6S)-5,6,7,8-tetrahydrofolate + NAD(+). The catalysed reaction is uridine(54) in tRNA + (6R)-5,10-methylene-5,6,7,8-tetrahydrofolate + NADPH + H(+) = 5-methyluridine(54) in tRNA + (6S)-5,6,7,8-tetrahydrofolate + NADP(+). Catalyzes the folate-dependent formation of 5-methyl-uridine at position 54 (M-5-U54) in all tRNAs. This is Methylenetetrahydrofolate--tRNA-(uracil-5-)-methyltransferase TrmFO from Cereibacter sphaeroides (strain ATCC 17029 / ATH 2.4.9) (Rhodobacter sphaeroides).